We begin with the raw amino-acid sequence, 646 residues long: Threonine--tRNA ligase (646 aa).

Positions 1–63 (MADLSIIFPD…SSGGSIEIIT (63 aa)) constitute a TGS domain. The tract at residues 244–541 (DHRKLGKELG…LIEEYKGAFP (298 aa)) is catalytic. The Zn(2+) site is built by Cys-337, His-388, and His-518.

The protein belongs to the class-II aminoacyl-tRNA synthetase family. In terms of assembly, homodimer. The cofactor is Zn(2+).

It localises to the cytoplasm. It carries out the reaction tRNA(Thr) + L-threonine + ATP = L-threonyl-tRNA(Thr) + AMP + diphosphate + H(+). In terms of biological role, catalyzes the attachment of threonine to tRNA(Thr) in a two-step reaction: L-threonine is first activated by ATP to form Thr-AMP and then transferred to the acceptor end of tRNA(Thr). Also edits incorrectly charged L-seryl-tRNA(Thr). The polypeptide is Threonine--tRNA ligase (Oceanobacillus iheyensis (strain DSM 14371 / CIP 107618 / JCM 11309 / KCTC 3954 / HTE831)).